Consider the following 73-residue polypeptide: IGMVAECKDGYLVGDDGCKMHCFTRPGHYCASECSRVKGKDGYCYAWLACYCYNMPNWAPIWNSATNSCGKGK.

Positions 1-7 (IGMVAEC) are cleaved as a signal peptide. In terms of domain architecture, LCN-type CS-alpha/beta spans 8 to 70 (KDGYLVGDDG…IWNSATNSCG (63 aa)). Disulfide bonds link C18-C69, C22-C44, C30-C50, and C34-C52. Residue K71 is modified to Lysine amide.

The protein belongs to the long (4 C-C) scorpion toxin superfamily. Sodium channel inhibitor family. Beta subfamily. Expressed by the venom gland.

The protein localises to the secreted. Beta toxins bind voltage-independently at site-4 of sodium channels (Nav) and shift the voltage of activation toward more negative potentials thereby affecting sodium channel activation and promoting spontaneous and repetitive firing. In Tityus discrepans (Venezuelan scorpion), this protein is Toxin Td9.